The sequence spans 83 residues: Protein L83L (83 aa).

Residues 1 to 26 form a disordered region; the sequence is MDTSLKKNNGALEADNKNYQNYKDEP.

Belongs to the asfivirus L83L family. In terms of assembly, interacts with host IL1B.

The protein localises to the host cytoplasm. Its function is as follows. May subvert the host innate immune response by interacting with host IL1B and interfering with its function. This chain is Protein L83L, found in Ornithodoros (relapsing fever ticks).